A 478-amino-acid chain; its full sequence is 5-hydroxytryptamine receptor 3A (478 aa).

Residues 1 to 23 form the signal peptide; that stretch reads MLLWVQQALLALLLPTLLAQGEA. Residues 24 to 241 are Extracellular-facing; sequence RRSRNTTRPA…MKFYVVIRRR (218 aa). Residues asparagine 28, asparagine 104, asparagine 170, and asparagine 186 are each glycosylated (N-linked (GlcNAc...) asparagine). A disulfide bond links cysteine 157 and cysteine 171. Residues 242–268 form a helical membrane-spanning segment; that stretch reads PLFYVVSLLLPSIFLMVMDIVGFYLPP. At 269–273 the chain is on the cytoplasmic side; it reads NSGER. A helical transmembrane segment spans residues 274–292; sequence VSFKITLLLGYSVFLIIVS. Topologically, residues 293–302 are extracellular; that stretch reads DTLPATAIGT. A helical membrane pass occupies residues 303-321; it reads PLIGVYFVVCMALLVISLA. Residues 322 to 455 are Cytoplasmic-facing; sequence ETIFIVRLVH…GSVLDKLLFH (134 aa). The segment at 389 to 408 is disordered; the sequence is GGPQDFEKSPRDRCSPPPPP. The span at 393–402 shows a compositional bias: basic and acidic residues; that stretch reads DFEKSPRDRC. The HA-stretch; determines single-channel conductance in 5-HT3 receptors stretch occupies residues 414–450; sequence AVCGLLQELSSIRQFLEKRDEIREVARDWLRVGSVLD. The helical transmembrane segment at 456–475 threads the bilayer; that stretch reads IYLLAVLAYSITLVMLWSIW. The Extracellular portion of the chain corresponds to 476–478; the sequence is QYA.

The protein belongs to the ligand-gated ion channel (TC 1.A.9) family. 5-hydroxytryptamine receptor (TC 1.A.9.2) subfamily. HTR3A sub-subfamily. Forms homopentameric as well as heteropentameric serotonin-activated cation-selective channel complexes with HTR3B or HTR3C or HTR3D or HTR3E. The homomeric complex is functional but exhibits low conductance with modified voltage dependence, and decreased agonist and antagonist affinity. Heteropentameric complexes display properties which resemble that of neuronal serotonin-activated channels in vivo. Interacts with RIC3. Expressed in cerebral cortex, amygdala, hippocampus, and testis. Detected in monocytes of the spleen and tonsil, in small and large intestine, uterus, prostate, ovary and placenta.

It is found in the postsynaptic cell membrane. The protein resides in the cell membrane. It carries out the reaction Na(+)(in) = Na(+)(out). The enzyme catalyses K(+)(in) = K(+)(out). It catalyses the reaction Ca(2+)(in) = Ca(2+)(out). The catalysed reaction is Mg(2+)(in) = Mg(2+)(out). Its function is as follows. Forms serotonin (5-hydroxytryptamine/5-HT3)-activated cation-selective channel complexes, which when activated cause fast, depolarizing responses in neurons. In Homo sapiens (Human), this protein is 5-hydroxytryptamine receptor 3A.